A 233-amino-acid chain; its full sequence is Type IV secretion system protein PtlE homolog (233 aa).

The chain crosses the membrane as a helical span at residues 42-62 (VAWAALAVTALSLIAIATMLP).

The protein belongs to the virB8 family.

The protein localises to the cell inner membrane. This chain is Type IV secretion system protein PtlE homolog (ptlE), found in Bordetella bronchiseptica (strain ATCC BAA-588 / NCTC 13252 / RB50) (Alcaligenes bronchisepticus).